The chain runs to 49 residues: Light-harvesting protein B-880 alpha chain (49 aa).

Residues 1–12 (MYKLWLLFDPRR) lie on the Cytoplasmic side of the membrane. A helical membrane pass occupies residues 13–33 (TLVALSAFLFVLGLIIHFISL). H29 serves as a coordination point for a bacteriochlorophyll. Residues 34–49 (STDRFNWLEGKPAVRA) lie on the Periplasmic side of the membrane.

This sequence belongs to the antenna complex alpha subunit family. The core complex is formed by different alpha and beta chains, binding bacteriochlorophyll molecules, and arranged most probably in tetrameric structures disposed around the reaction center. The non-pigmented gamma chains may constitute additional components.

Its subcellular location is the cell inner membrane. In terms of biological role, antenna complexes are light-harvesting systems, which transfer the excitation energy to the reaction centers. The protein is Light-harvesting protein B-880 alpha chain of Rhodoblastus acidophilus (Rhodopseudomonas acidophila).